A 445-amino-acid polypeptide reads, in one-letter code: ATP synthase subunit b-delta (445 aa).

An ATP synthase subunit b region spans residues 1 to 168 (MSIFIGQLIG…PSSVVIDTAA (168 aa)). The helical transmembrane segment at 3–23 (IFIGQLIGFAVIAFIIVKWVV) threads the bilayer. The tract at residues 169 to 445 (TSRLRAASRQ…LAAAQTGLPD (277 aa)) is ATP synthase subunit delta.

It in the N-terminal section; belongs to the ATPase B chain family. In the C-terminal section; belongs to the ATPase delta chain family. As to quaternary structure, F-type ATPases have 2 components, F(1) - the catalytic core - and F(0) - the membrane proton channel. F(1) has five subunits: alpha(3), beta(3), gamma(1), delta(1), epsilon(1). F(0) has three main subunits: a(1), b(2) and c(10-14). The alpha and beta chains form an alternating ring which encloses part of the gamma chain. F(1) is attached to F(0) by a central stalk formed by the gamma and epsilon chains, while a peripheral stalk is formed by the delta and b chains.

It localises to the cell membrane. F(1)F(0) ATP synthase produces ATP from ADP in the presence of a proton or sodium gradient. F-type ATPases consist of two structural domains, F(1) containing the extramembraneous catalytic core and F(0) containing the membrane proton channel, linked together by a central stalk and a peripheral stalk. During catalysis, ATP synthesis in the catalytic domain of F(1) is coupled via a rotary mechanism of the central stalk subunits to proton translocation. Functionally, this fusion protein includes a component of the F(0) channel (subunit b) and of the F(1) subunit (subunit delta). Two copies of subunit b and one of delta together form the peripheral 'stator' stalk which links F(1) to F(0). This is ATP synthase subunit b-delta (atpFH) from Mycolicibacterium smegmatis (strain ATCC 700084 / mc(2)155) (Mycobacterium smegmatis).